Here is a 268-residue protein sequence, read N- to C-terminus: Probable RNA methyltransferase C2A9.10 (268 aa).

In terms of domain architecture, Bin3-type SAM spans 23 to 258 (DPRLKCLPDS…RTMYIYKKKG (236 aa)).

This sequence belongs to the methyltransferase superfamily.

Functionally, probable RNA methyltransferase. The polypeptide is Probable RNA methyltransferase C2A9.10 (Schizosaccharomyces pombe (strain 972 / ATCC 24843) (Fission yeast)).